The following is a 1258-amino-acid chain: Plasma membrane calcium-transporting ATPase 3 (1258 aa).

A compositionally biased stretch (polar residues) spans 1–19 (MGDMANSSIEFHPKPQQQR). Residues 1 to 22 (MGDMANSSIEFHPKPQQQREVP) are disordered. Residues 1-97 (MGDMANSSIE…NFIPPKQPKT (97 aa)) lie on the Cytoplasmic side of the membrane. Phosphoserine is present on S8. The chain crosses the membrane as a helical span at residues 98-118 (FLQLVWEALQDVTLIILEVAA). Residues 119–155 (IVSLGLSFYAPPGEESEACGNVSGGAEDEGEAEAGWI) are Extracellular-facing. A helical membrane pass occupies residues 156–176 (EGAAILLSVICVVLVTAFNDW). Residues 177–364 (SKEKQFRGLQ…KEKSVLQGKL (188 aa)) lie on the Cytoplasmic side of the membrane. Disordered stretches follow at residues 298–328 (EEEK…GAVA) and 335–354 (KSAE…NVPK). 2 stretches are compositionally biased toward basic and acidic residues: residues 299–308 (EEKKDKKGKQ) and 342–354 (MEER…NVPK). A helical transmembrane segment spans residues 365-384 (TKLAVQIGKAGLVMSAITVI). At 385–417 (ILVLYFVIETFVVDGRVWLAECTPVYVQYFVKF) the chain is on the extracellular side. Residues 418–435 (FIIGVTVLVVAVPEGLPL) traverse the membrane as a helical segment. Over 436 to 849 (AVTISLAYSV…MWGRNVYDSI (414 aa)) the chain is Cytoplasmic. Residue D473 is the 4-aspartylphosphate intermediate of the active site. D794 and D798 together coordinate Mg(2+). Residues 850–869 (SKFLQFQLTVNVVAVIVAFT) traverse the membrane as a helical segment. Topologically, residues 870–879 (GACITQDSPL) are extracellular. Residues 880–900 (KAVQMLWVNLIMDTFASLALA) traverse the membrane as a helical segment. Residues 901 to 920 (TEPPTESLLLRKPYGRDKPL) are Cytoplasmic-facing. The helical transmembrane segment at 921–943 (ISRTMMKNILGHAVYQLTIIFTL) threads the bilayer. Topologically, residues 944–961 (LFVGELFFDIDSGRNAPL) are extracellular. The chain crosses the membrane as a helical span at residues 962–983 (HSPPSEHYTIIFNTFVMMQLFN). The Cytoplasmic segment spans residues 984 to 1002 (EINARKIHGERNVFDGIFS). The helical transmembrane segment at 1003–1024 (NPIFCTIVLGTFGIQIVIVQFG) threads the bilayer. Topologically, residues 1025–1034 (GKPFSCSPLS) are extracellular. The chain crosses the membrane as a helical span at residues 1035 to 1056 (TEQWLWCLFVGVGELVWGQVIA). At 1057-1258 (TIPTSQLKCL…SPLHSMETSL (202 aa)) the chain is on the cytoplasmic side. T1079 is modified (phosphothreonine). Positions 1097–1114 (LRRGQILWFRGLNRIQTQ) are calmodulin-binding subdomain A. T1113 carries the post-translational modification Phosphothreonine; by PKC. The segment at 1115-1124 (MEVVSTFKRS) is calmodulin-binding subdomain B. Position 1126 is a phosphoserine (S1126). A disordered region spans residues 1204–1258 (ENEERLRAPPPPPPNQNNNAIDSGIYLTTHATKSATSSAFSSRPGSPLHSMETSL). The segment covering 1231–1245 (TTHATKSATSSAFSS) has biased composition (low complexity).

It belongs to the cation transport ATPase (P-type) (TC 3.A.3) family. Type IIB subfamily. As to quaternary structure, interacts with PDZD11. Interacts (via N-terminus) with YWHAE. In terms of tissue distribution, expressed predominantly in brain and skeletal muscle. Expressed in the molecular layer of the cerebellar cortex, in particular in granule cells (at protein level). Expressed in aldosterone producing glomerulosa cells of adrenal glands (at protein level). Detected at low levels in various tissues including testis, stomach, small intestine, and large intestine. As to expression, most abundant form in brain and most other tissues. Most abundant form in skeletal muscle and is also found in brain and at low levels in testis and kidney.

It is found in the cell membrane. The protein localises to the presynaptic cell membrane. It carries out the reaction Ca(2+)(in) + ATP + H2O = Ca(2+)(out) + ADP + phosphate + H(+). Its function is as follows. ATP-driven Ca(2+) ion pump involved in the maintenance of basal intracellular Ca(2+) levels at the presynaptic terminals. Uses ATP as an energy source to transport cytosolic Ca(2+) ions across the plasma membrane to the extracellular compartment. May counter-transport protons, but the mechanism and the stoichiometry of this Ca(2+)/H(+) exchange remains to be established. The polypeptide is Plasma membrane calcium-transporting ATPase 3 (Atp2b3) (Rattus norvegicus (Rat)).